The sequence spans 68 residues: Intracellular calcium channel modulator CCP-Ts (68 aa).

Residues Met-1–Ala-23 form the signal peptide. Cystine bridges form between Cys-33/Cys-47, Cys-40/Cys-53, and Cys-46/Cys-62.

The protein belongs to the scorpion calcin-like family. Expressed by the venom gland. In intravenously injected mice, the labeled toxin has preference for heart, liver and lungs.

Its subcellular location is the secreted. It is found in the nucleus. Functionally, cell penetrating peptide (CPP) that increases intracellular calcium release through the activation of nuclear inositol 1,4,5-trisphosphate receptors (ITPR) of cardiomyocytes, thereby causing an increase in the contraction frequency of these cells. In vivo, this toxin is not lethal to mice, hovewer anti-CPP serum reduces venom lethality, suggesting that this toxin is lethal when it acts in synergy with other venom components. This Tityus serrulatus (Brazilian scorpion) protein is Intracellular calcium channel modulator CCP-Ts.